The chain runs to 428 residues: Elongation factor 1-alpha (428 aa).

One can recognise a tr-type G domain in the interval K5 to K215. The interval G14 to S21 is G1. Residue G14–S21 participates in GTP binding. S21 is a Mg(2+) binding site. Positions G68 to D72 are G2. The segment at D89–G92 is G3. GTP-binding positions include D89–H93 and N144–D147. A G4 region spans residues N144–D147. The G5 stretch occupies residues S181–W183.

It belongs to the TRAFAC class translation factor GTPase superfamily. Classic translation factor GTPase family. EF-Tu/EF-1A subfamily.

Its subcellular location is the cytoplasm. The catalysed reaction is GTP + H2O = GDP + phosphate + H(+). Functionally, GTP hydrolase that promotes the GTP-dependent binding of aminoacyl-tRNA to the A-site of ribosomes during protein biosynthesis. The protein is Elongation factor 1-alpha of Thermococcus onnurineus (strain NA1).